The following is a 453-amino-acid chain: Cysteine--tRNA ligase (453 aa).

Cys-30 is a Zn(2+) binding site. Positions 32–42 (PTVYDRAHLGN) match the 'HIGH' region motif. Zn(2+) contacts are provided by Cys-212, His-237, and Glu-241. The 'KMSKS' region motif lies at 268 to 272 (KMSKS). Residue Lys-271 coordinates ATP.

This sequence belongs to the class-I aminoacyl-tRNA synthetase family. As to quaternary structure, monomer. Zn(2+) serves as cofactor.

It localises to the cytoplasm. The enzyme catalyses tRNA(Cys) + L-cysteine + ATP = L-cysteinyl-tRNA(Cys) + AMP + diphosphate. This chain is Cysteine--tRNA ligase, found in Jannaschia sp. (strain CCS1).